Consider the following 473-residue polypeptide: GTPase Der (473 aa).

2 EngA-type G domains span residues 3–167 and 203–378; these read FTVA…GKDR and LRVA…RVWN. GTP-binding positions include 9 to 16, 56 to 60, 119 to 122, 209 to 216, 256 to 260, and 321 to 324; these read GRPNVGKS, DTAGL, NKSE, GRPNAGKS, DTAGM, and NKWD. Residues 379 to 463 enclose the KH-like domain; sequence KRISTARLNR…PIRIHFRSPD (85 aa).

This sequence belongs to the TRAFAC class TrmE-Era-EngA-EngB-Septin-like GTPase superfamily. EngA (Der) GTPase family. As to quaternary structure, associates with the 50S ribosomal subunit.

Functionally, GTPase that plays an essential role in the late steps of ribosome biogenesis. The sequence is that of GTPase Der from Rhizobium etli (strain ATCC 51251 / DSM 11541 / JCM 21823 / NBRC 15573 / CFN 42).